The following is a 674-amino-acid chain: CRS2-associated factor 1, chloroplastic (674 aa).

Residues 1–54 constitute a chloroplast transit peptide; sequence MATARLPSRSFLSPAQQSYPRLPASVRLCLSHHEQPPTGPKRHRRAATSHPAFS. The disordered stretch occupies residues 31–61; the sequence is SHHEQPPTGPKRHRRAATSHPAFSAAARGRA. Residues 48-57 are compositionally biased toward low complexity; it reads TSHPAFSAAA. 2 consecutive CRM domains span residues 183–279 and 301–397; these read EPLT…TRPC and GGLT…LPPL. The CRS2 binding stretch occupies residues 554–576; sequence GLLCLLEQAIHSGRALVLSEDEL.

Interacts with CRS2 and RNA. Part of large ribonucleo-protein complexes that include group IIB introns, CRS2 and CAF1.

Its subcellular location is the plastid. The protein resides in the chloroplast stroma. In terms of biological role, required for the splicing of group IIB introns in chloroplasts. Forms splicing particles with CRS2. Interacts with RNA and confers intron specificity of the splicing particles. The chain is CRS2-associated factor 1, chloroplastic (CAF1) from Zea mays (Maize).